The following is a 106-amino-acid chain: Thiosulfate sulfurtransferase GlpE (106 aa).

In terms of domain architecture, Rhodanese spans 16–104 (REQGAVLVDV…WRATYPDETV (89 aa)). Cys64 (cysteine persulfide intermediate) is an active-site residue.

This sequence belongs to the GlpE family.

The protein localises to the cytoplasm. The enzyme catalyses thiosulfate + hydrogen cyanide = thiocyanate + sulfite + 2 H(+). It carries out the reaction thiosulfate + [thioredoxin]-dithiol = [thioredoxin]-disulfide + hydrogen sulfide + sulfite + 2 H(+). In terms of biological role, transferase that catalyzes the transfer of sulfur from thiosulfate to thiophilic acceptors such as cyanide or dithiols. May function in a CysM-independent thiosulfate assimilation pathway by catalyzing the conversion of thiosulfate to sulfite, which can then be used for L-cysteine biosynthesis. This Pseudomonas savastanoi pv. phaseolicola (strain 1448A / Race 6) (Pseudomonas syringae pv. phaseolicola (strain 1448A / Race 6)) protein is Thiosulfate sulfurtransferase GlpE.